The primary structure comprises 135 residues: MKPDWPRRGAAGTRVRSRGEGDGTYFARRGAGRRRREIKAPIRAAWSPPSAAMSGLQSGRRWRPQGTGTGARAAGALAALRLGPRLRAAPLLAPLWLLAPTPDSHMTPAPLALRASRGWRENNLSDYQYSWMQKC.

Residues methionine 1–glycine 70 are disordered.

This is an uncharacterized protein from Homo sapiens (Human).